Reading from the N-terminus, the 602-residue chain is uncharacterized protein (602 aa).

Asparagine 305, asparagine 497, and asparagine 577 each carry an N-linked (GlcNAc...) asparagine glycan.

Post-translationally, N-glycosylated.

The protein resides in the vacuole. This is an uncharacterized protein from Saccharomyces cerevisiae (strain ATCC 204508 / S288c) (Baker's yeast).